A 246-amino-acid polypeptide reads, in one-letter code: tRNA pseudouridine synthase A (246 aa).

D52 (nucleophile) is an active-site residue. Y111 serves as a coordination point for substrate.

It belongs to the tRNA pseudouridine synthase TruA family. Homodimer.

It carries out the reaction uridine(38/39/40) in tRNA = pseudouridine(38/39/40) in tRNA. In terms of biological role, formation of pseudouridine at positions 38, 39 and 40 in the anticodon stem and loop of transfer RNAs. The polypeptide is tRNA pseudouridine synthase A (Ehrlichia ruminantium (strain Gardel)).